The sequence spans 1286 residues: X-linked retinitis pigmentosa GTPase regulator-interacting protein 1 (1286 aa).

A disordered region spans residues Gln-144–Pro-193. Basic and acidic residues-rich tracts occupy residues Glu-159–Leu-169 and Phe-177–Val-189. Residues Lys-294–Leu-584 adopt a coiled-coil conformation. In terms of domain architecture, C2 spans Gly-781–Phe-906. Disordered regions lie at residues Ser-934–Gly-1008 and Glu-1058–Gln-1108. Basic and acidic residues-rich tracts occupy residues Ala-940–Ala-960, His-988–Gln-998, and Lys-1070–Ser-1084. Residues Glu-1085–Thr-1096 are compositionally biased toward polar residues. The interval Ser-1091–Thr-1281 is interaction with RPGR.

Belongs to the RPGRIP1 family. In terms of assembly, forms homodimers and elongated homopolymers. Interacts with RPGR. Interacts with NPHP4. Interacts with NEK4. Interacts with SPATA7. Interacts with CEP290/NPHP6; mediating the association between RPGR and CEP290/NPHP6. As to expression, strong expression in retina, with weaker expression in testis. Expressed in other neurons such as amacrine cells. Colocalizes with RGPR in the outer segment of rod photoreceptors and cone outer segments.

It is found in the cell projection. The protein resides in the cilium. May function as scaffolding protein. Required for normal location of RPGR at the connecting cilium of photoreceptor cells. Required for normal disk morphogenesis and disk organization in the outer segment of photoreceptor cells and for survival of photoreceptor cells. The polypeptide is X-linked retinitis pigmentosa GTPase regulator-interacting protein 1 (RPGRIP1) (Homo sapiens (Human)).